A 207-amino-acid polypeptide reads, in one-letter code: Alpha-1-acid glycoprotein 1 (207 aa).

Residues 1–18 (MALHTVLIILSLLPMLEA) form the signal peptide. Glutamine 19 carries the post-translational modification Pyrrolidone carboxylic acid. Asparagine 25, asparagine 34, asparagine 76, asparagine 94, and asparagine 104 each carry an N-linked (GlcNAc...) asparagine glycan. Cysteine 91 and cysteine 184 form a disulfide bridge.

The protein belongs to the calycin superfamily. Lipocalin family.

The protein resides in the secreted. Functions as a transport protein in the blood stream. Binds various ligands in the interior of its beta-barrel domain. Appears to function in modulating the activity of the immune system during the acute-phase reaction. This is Alpha-1-acid glycoprotein 1 (Orm1) from Mus musculus (Mouse).